The sequence spans 898 residues: Serine/threonine-protein kinase TAO3 (898 aa).

The region spanning 24 to 277 (FVGLHEIGHG…SADLLRHDFV (254 aa)) is the Protein kinase domain. ATP-binding positions include 30-38 (IGHGSFGAV) and lysine 53. The Proton acceptor role is filled by aspartate 147. The segment at 316–374 (TRNGPLTESQEEEEDSEHGSNLSRKMDSLGSNHSIPSMSVSTGSQSSSVSSMQEVLDES) is disordered. Residues 334–351 (GSNLSRKMDSLGSNHSIP) show a composition bias toward polar residues. A compositionally biased stretch (low complexity) spans 352–368 (SMSVSTGSQSSSVSSMQ). 3 coiled-coil regions span residues 452–502 (EQEN…THAN), 548–649 (FLES…HAML), and 754–875 (LKSL…IETF). The disordered stretch occupies residues 565–596 (EEMNEDHSTPKKEKQERISKHKENLQHTQAEE).

Belongs to the protein kinase superfamily. STE Ser/Thr protein kinase family. STE20 subfamily.

It is found in the cytoplasm. It localises to the cell membrane. The protein localises to the membrane raft. The protein resides in the lipid droplet. The catalysed reaction is L-seryl-[protein] + ATP = O-phospho-L-seryl-[protein] + ADP + H(+). It carries out the reaction L-threonyl-[protein] + ATP = O-phospho-L-threonyl-[protein] + ADP + H(+). In terms of biological role, serine/threonine-protein kinase that acts as a regulator of the p38/MAPK14 stress-activated MAPK cascade and of the MAPK8/JNK cascade. In response to DNA damage, involved in the G2/M transition DNA damage checkpoint by activating the p38/MAPK14 stress-activated MAPK cascade, probably by mediating phosphorylation of upstream MAP kinase kinases. Inhibits basal activity of the MAPK8/JNK cascade. This chain is Serine/threonine-protein kinase TAO3 (TAOK3), found in Gallus gallus (Chicken).